A 310-amino-acid polypeptide reads, in one-letter code: Ribosomal protein uL3 glutamine methyltransferase (310 aa).

This sequence belongs to the protein N5-glutamine methyltransferase family. PrmB subfamily.

The catalysed reaction is L-glutaminyl-[ribosomal protein uL3] + S-adenosyl-L-methionine = N(5)-methyl-L-glutaminyl-[ribosomal protein uL3] + S-adenosyl-L-homocysteine + H(+). In terms of biological role, methylates large ribosomal subunit protein uL3 on a specific glutamine residue. The chain is Ribosomal protein uL3 glutamine methyltransferase from Aliivibrio fischeri (strain ATCC 700601 / ES114) (Vibrio fischeri).